The following is an 86-amino-acid chain: MSDDITSEAQTIAVGQLRAFIERIERLEEEKKTIGDDIKEVYAELKGSGFDSKVVRTIIRLRKKEDHERQEEEAMLQLYMDALGMS.

This sequence belongs to the UPF0335 family.

This Brucella abortus biovar 1 (strain 9-941) protein is UPF0335 protein BruAb1_1737.